A 347-amino-acid chain; its full sequence is Dihydroorotate dehydrogenase (quinone) (347 aa).

FMN is bound by residues 62 to 66 (AGLDK) and threonine 86. Lysine 66 provides a ligand contact to substrate. 111–115 (NRMGF) is a substrate binding site. 2 residues coordinate FMN: asparagine 142 and asparagine 175. Asparagine 175 contributes to the substrate binding site. The Nucleophile role is filled by serine 178. Asparagine 180 serves as a coordination point for substrate. FMN contacts are provided by lysine 220 and threonine 248. Position 249-250 (249-250 (NT)) interacts with substrate. FMN contacts are provided by residues glycine 271, glycine 300, and 321–322 (YS).

The protein belongs to the dihydroorotate dehydrogenase family. Type 2 subfamily. In terms of assembly, monomer. It depends on FMN as a cofactor.

It is found in the cell membrane. The catalysed reaction is (S)-dihydroorotate + a quinone = orotate + a quinol. The protein operates within pyrimidine metabolism; UMP biosynthesis via de novo pathway; orotate from (S)-dihydroorotate (quinone route): step 1/1. Catalyzes the conversion of dihydroorotate to orotate with quinone as electron acceptor. The polypeptide is Dihydroorotate dehydrogenase (quinone) (Dechloromonas aromatica (strain RCB)).